Reading from the N-terminus, the 292-residue chain is Glutamate racemase (292 aa).

Substrate is bound by residues 10–11 (DS) and 42–43 (YG). The active-site Proton donor/acceptor is the cysteine 73. Residue 74–75 (NS) coordinates substrate. The Proton donor/acceptor role is filled by cysteine 186. 187-188 (TH) contacts substrate.

The protein belongs to the aspartate/glutamate racemases family.

The enzyme catalyses L-glutamate = D-glutamate. It participates in cell wall biogenesis; peptidoglycan biosynthesis. Provides the (R)-glutamate required for cell wall biosynthesis. This chain is Glutamate racemase, found in Beutenbergia cavernae (strain ATCC BAA-8 / DSM 12333 / CCUG 43141 / JCM 11478 / NBRC 16432 / NCIMB 13614 / HKI 0122).